A 312-amino-acid polypeptide reads, in one-letter code: Ribose-phosphate pyrophosphokinase (312 aa).

ATP is bound by residues 34-36 and 93-94; these read DLE and RQ. Mg(2+)-binding residues include H127 and D168. K192 is a catalytic residue. Residues R194, D218, and 222–226 each bind D-ribose 5-phosphate; that span reads DSAGT.

It belongs to the ribose-phosphate pyrophosphokinase family. Class I subfamily. As to quaternary structure, homohexamer. Requires Mg(2+) as cofactor.

The protein resides in the cytoplasm. It carries out the reaction D-ribose 5-phosphate + ATP = 5-phospho-alpha-D-ribose 1-diphosphate + AMP + H(+). The protein operates within metabolic intermediate biosynthesis; 5-phospho-alpha-D-ribose 1-diphosphate biosynthesis; 5-phospho-alpha-D-ribose 1-diphosphate from D-ribose 5-phosphate (route I): step 1/1. Involved in the biosynthesis of the central metabolite phospho-alpha-D-ribosyl-1-pyrophosphate (PRPP) via the transfer of pyrophosphoryl group from ATP to 1-hydroxyl of ribose-5-phosphate (Rib-5-P). This chain is Ribose-phosphate pyrophosphokinase, found in Caulobacter vibrioides (strain ATCC 19089 / CIP 103742 / CB 15) (Caulobacter crescentus).